We begin with the raw amino-acid sequence, 741 residues long: Multifunctional procollagen lysine hydroxylase and glycosyltransferase LH3 (741 aa).

Residues Met1–Ala27 form the signal peptide. Residues Ser28 to Pro293 are required for glycosyltransferase activity. Val47–Thr49 contributes to the UDP binding site. A glycan (N-linked (GlcNAc...) asparagine) is linked at Asn66. Asp115, Asp118, and His256 together coordinate Mn(2+). Residue Asp115–Tyr117 coordinates UDP. Gly259–Lys262 is a UDP binding site. 2 disulfides stabilise this stretch: Cys282-Cys285 and Cys382-Cys388. Residues Pro298 to His523 are accessory region. N-linked (GlcNAc...) asparagine glycosylation occurs at Asn551. A disulfide bridge links Cys566 with Cys701. Arg602 and Tyr659 together coordinate 2-oxoglutarate. A Fe2OG dioxygenase domain is found at Arg650–Pro741. Fe cation-binding residues include His670 and Asp672. The tract at residues Thr675 to Leu718 is important for dimerization. Asn679 lines the 2-oxoglutarate pocket. His722 lines the Fe cation pocket. Arg732 lines the 2-oxoglutarate pocket.

In terms of assembly, homodimer. Fe(2+) is required as a cofactor. It depends on L-ascorbate as a cofactor. The cofactor is Mn(2+). Detected in heart and bone.

The protein resides in the rough endoplasmic reticulum. Its subcellular location is the endoplasmic reticulum lumen. The protein localises to the endoplasmic reticulum membrane. It is found in the secreted. It localises to the extracellular space. The catalysed reaction is L-lysyl-[collagen] + 2-oxoglutarate + O2 = (5R)-5-hydroxy-L-lysyl-[collagen] + succinate + CO2. It catalyses the reaction (5R)-5-hydroxy-L-lysyl-[collagen] + UDP-alpha-D-galactose = (5R)-5-O-(beta-D-galactosyl)-5-hydroxy-L-lysyl-[collagen] + UDP + H(+). It carries out the reaction (5R)-5-O-(beta-D-galactosyl)-5-hydroxy-L-lysyl-[collagen] + UDP-alpha-D-glucose = (5R)-5-O-[alpha-D-glucosyl-(1-&gt;2)-beta-D-galactosyl]-5-hydroxy-L-lysyl-[collagen] + UDP + H(+). Functionally, multifunctional enzyme that catalyzes a series of post-translational modifications on Lys residues in procollagen. Plays a redundant role in catalyzing the formation of hydroxylysine residues in -Xaa-Lys-Gly- sequences in collagens. Plays a redundant role in catalyzing the transfer of galactose onto hydroxylysine groups, giving rise to galactosyl 5-hydroxylysine. Has an essential role by catalyzing the subsequent transfer of glucose moieties, giving rise to 1,2-glucosylgalactosyl-5-hydroxylysine residues. Catalyzes hydroxylation and glycosylation of Lys residues in the MBL1 collagen-like domain, giving rise to hydroxylysine and 1,2-glucosylgalactosyl-5-hydroxylysine residues. Catalyzes hydroxylation and glycosylation of Lys residues in the ADIPOQ collagen-like domain, giving rise to hydroxylysine and 1,2-glucosylgalactosyl-5-hydroxylysine residues. Essential for normal biosynthesis and secretion of type IV collagens. Essential for normal formation of basement membranes. This chain is Multifunctional procollagen lysine hydroxylase and glycosyltransferase LH3 (Plod3), found in Rattus norvegicus (Rat).